Here is a 212-residue protein sequence, read N- to C-terminus: Uridine kinase (212 aa).

13–20 contributes to the ATP binding site; it reads GASASGKS.

Belongs to the uridine kinase family.

Its subcellular location is the cytoplasm. It carries out the reaction uridine + ATP = UMP + ADP + H(+). The catalysed reaction is cytidine + ATP = CMP + ADP + H(+). Its pathway is pyrimidine metabolism; CTP biosynthesis via salvage pathway; CTP from cytidine: step 1/3. It participates in pyrimidine metabolism; UMP biosynthesis via salvage pathway; UMP from uridine: step 1/1. This Shewanella piezotolerans (strain WP3 / JCM 13877) protein is Uridine kinase.